Consider the following 67-residue polypeptide: Putative sodium channel alpha-toxin Acra7 (67 aa).

The region spanning R2–T66 is the LCN-type CS-alpha/beta domain. 4 cysteine pairs are disulfide-bonded: C12-C65, C16-C37, C23-C47, and C27-C49. A propeptide (removed by a carboxypeptidase) is located at residue R67.

This sequence belongs to the long (4 C-C) scorpion toxin superfamily. Sodium channel inhibitor family. Alpha subfamily. Expressed by the venom gland.

It is found in the secreted. Alpha toxins bind voltage-independently at site-3 of sodium channels (Nav) and inhibit the inactivation of the activated channels, thereby blocking neuronal transmission. The chain is Putative sodium channel alpha-toxin Acra7 from Androctonus crassicauda (Arabian fat-tailed scorpion).